Reading from the N-terminus, the 376-residue chain is Glutamate 5-kinase (376 aa).

Lys-18 is a binding site for ATP. The substrate site is built by Ser-58, Asp-145, and Asn-157. ATP contacts are provided by residues 177-178 (SD) and 218-224 (TGGMASK). One can recognise a PUA domain in the interval 280–358 (TGALTLDAGA…SELPGELRRP (79 aa)).

This sequence belongs to the glutamate 5-kinase family.

Its subcellular location is the cytoplasm. The enzyme catalyses L-glutamate + ATP = L-glutamyl 5-phosphate + ADP. It functions in the pathway amino-acid biosynthesis; L-proline biosynthesis; L-glutamate 5-semialdehyde from L-glutamate: step 1/2. Its function is as follows. Catalyzes the transfer of a phosphate group to glutamate to form L-glutamate 5-phosphate. The sequence is that of Glutamate 5-kinase from Mycobacterium tuberculosis (strain CDC 1551 / Oshkosh).